Consider the following 476-residue polypeptide: Protein transport protein Sec61 subunit alpha isoform 2 (476 aa).

Over 1-33 the chain is Cytoplasmic; the sequence is MGIKFLEVIKPFCAVLPEIQKPERKIQFREKVL. Residues 34–53 traverse the membrane as a helical segment; the sequence is WTAITLFIFLVCCQIPLFGI. Residues 54–76 lie on the Lumenal side of the membrane; sequence MSSDSADPFYWMRVILASNRGTL. Residues 77-96 form a helical membrane-spanning segment; sequence MELGISPIVTSGLIMQLLAG. Topologically, residues 97–117 are cytoplasmic; that stretch reads AKIIEVGDTPKDRALFNGAQK. A helical membrane pass occupies residues 118 to 138; sequence LFGMIITIGQAIVYVMTGMYG. The Lumenal segment spans residues 139–144; the sequence is DPAEMG. A helical transmembrane segment spans residues 145–165; the sequence is AGICLLIIIQLFVAGLIVLLL. The Cytoplasmic portion of the chain corresponds to 166–172; that stretch reads DELLQKG. A helical transmembrane segment spans residues 173-193; it reads YGLGSGISLFIATNICETIVW. Topologically, residues 194–240 are lumenal; it reads KAFSPTTINTGRGTEFEGAVIALFHLLATRTDKVRALREAFYRQNLP. A helical membrane pass occupies residues 241–261; sequence NLMNLIATVFVFAVVIYFQGF. Over 262–288 the chain is Cytoplasmic; sequence RVDLPIKSARYRGQYSSYPIKLFYTSN. A helical transmembrane segment spans residues 289-309; it reads IPIILQSALVSNLYVISQMLS. Topologically, residues 310 to 354 are lumenal; that stretch reads VRFSGNFLVNLLGQWADVSGGGPARSYPVGGLCYYLSPPESMGAI. A helical membrane pass occupies residues 355–375; that stretch reads FEDPVHVVVYIIFMLGSCAFF. At 376-420 the chain is on the cytoplasmic side; it reads SKTWIEVSGSSAKDVAKQLKEQQMVMRGHRDTSMVHELNRYIPTA. Residues 421–441 traverse the membrane as a helical segment; the sequence is AAFGGLCIGALSVLADFLGAI. Residues 442 to 445 lie on the Lumenal side of the membrane; the sequence is GSGT. Residues 446–462 traverse the membrane as a helical segment; the sequence is GILLAVTIIYQYFEIFV. Over 463–476 the chain is Cytoplasmic; that stretch reads KEQAEVGGMGALFF.

This sequence belongs to the SecY/SEC61-alpha family. In terms of assembly, the SEC61 channel-forming translocon complex consists of channel-forming core components SEC61A1, SEC61B and SEC61G and different auxiliary components such as SEC62 and SEC63.

Its subcellular location is the endoplasmic reticulum membrane. Functionally, component of SEC61 channel-forming translocon complex that mediates transport of signal peptide-containing precursor polypeptides across the endoplasmic reticulum (ER). Forms a ribosome receptor and a gated pore in the ER membrane, both functions required for cotranslational translocation of nascent polypeptides. In Homo sapiens (Human), this protein is Protein transport protein Sec61 subunit alpha isoform 2 (SEC61A2).